The sequence spans 438 residues: 3-phosphoshikimate 1-carboxyvinyltransferase (438 aa).

3 residues coordinate 3-phosphoshikimate: K25, S26, and R30. A phosphoenolpyruvate-binding site is contributed by K25. Phosphoenolpyruvate is bound by residues G99 and R128. 3-phosphoshikimate is bound by residues S173, Q175, D325, and K352. Q175 contacts phosphoenolpyruvate. D325 serves as the catalytic Proton acceptor. Residues R356 and R398 each contribute to the phosphoenolpyruvate site.

It belongs to the EPSP synthase family. As to quaternary structure, monomer.

Its subcellular location is the cytoplasm. The catalysed reaction is 3-phosphoshikimate + phosphoenolpyruvate = 5-O-(1-carboxyvinyl)-3-phosphoshikimate + phosphate. It participates in metabolic intermediate biosynthesis; chorismate biosynthesis; chorismate from D-erythrose 4-phosphate and phosphoenolpyruvate: step 6/7. Its function is as follows. Catalyzes the transfer of the enolpyruvyl moiety of phosphoenolpyruvate (PEP) to the 5-hydroxyl of shikimate-3-phosphate (S3P) to produce enolpyruvyl shikimate-3-phosphate and inorganic phosphate. The protein is 3-phosphoshikimate 1-carboxyvinyltransferase of Prochlorococcus marinus subsp. pastoris (strain CCMP1986 / NIES-2087 / MED4).